The primary structure comprises 341 residues: L-threonine 3-dehydrogenase (341 aa).

Cys38 lines the Zn(2+) pocket. Catalysis depends on charge relay system residues Thr40 and His43. Positions 63, 64, 93, 96, 99, and 107 each coordinate Zn(2+). Residues Ile175, Asp195, Arg200, Leu262 to Ile264, and Ile286 to Tyr287 contribute to the NAD(+) site.

This sequence belongs to the zinc-containing alcohol dehydrogenase family. As to quaternary structure, homotetramer. Zn(2+) serves as cofactor.

The protein resides in the cytoplasm. It catalyses the reaction L-threonine + NAD(+) = (2S)-2-amino-3-oxobutanoate + NADH + H(+). It participates in amino-acid degradation; L-threonine degradation via oxydo-reductase pathway; glycine from L-threonine: step 1/2. In terms of biological role, catalyzes the NAD(+)-dependent oxidation of L-threonine to 2-amino-3-ketobutyrate. This is L-threonine 3-dehydrogenase from Yersinia pestis bv. Antiqua (strain Antiqua).